A 579-amino-acid polypeptide reads, in one-letter code: Extracellular serine/threonine protein kinase FAM20C (579 aa).

The Cytoplasmic portion of the chain corresponds to 1 to 10 (MKMILVRRFR). A propeptide spanning residues 1–87 (MKMILVRRFR…PNKHTLRILQ (87 aa)) is cleaved from the precursor. The chain crosses the membrane as a helical; Signal-anchor for type II membrane protein span at residues 11–31 (VLILVVFLLACALHIAVDLLP). Over 32–579 (KLDRRATRSS…ATEHRASTER (548 aa)) the chain is Lumenal. Residues 38–79 (TRSSGEPGCSCAQPAAEAAGPGWAQARSRPGESAGGDAGWPN) form a disordered region. Residues 49 to 63 (AQPAAEAAGPGWAQA) show a composition bias toward low complexity. N96 is a glycosylation site (N-linked (GlcNAc...) asparagine). The interval 104–155 (KLPSAAEPVDHAPRGQEPRSPPPRDPAHRPLLRDPGPRPRVPPPGPSGDGSL) is disordered. Composition is skewed to basic and acidic residues over residues 111-120 (PVDHAPRGQE) and 128-140 (DPAH…DPGP). ATP contacts are provided by Q264, K280, and E301. A Mn(2+)-binding site is contributed by E301. The kinase domain stretch occupies residues 349-560 (FVSPANNICF…AVRDCVEKDG (212 aa)). 2 disulfide bridges follow: C357–C373 and C362–C366. An ATP-binding site is contributed by 384–387 (AAFL). 2 disulfides stabilise this stretch: C421/C495 and C496/C555. The active site involves D453. The ATP site is built by E458 and D473. D473 contacts Mn(2+).

The protein belongs to the FAM20 family. In terms of assembly, homodimer; disulfide-linked. Interacts with FAM20A; probably forming a heterotetramer of 2 subunits of FAM20A and 2 subunits of FAM20C. Interacts with COPII components SEC23A and SEC24A; transport of FAM20C from the endoplasmic reticulum to the Golgi is likely to be mediated by COPII vesicles. Mn(2+) is required as a cofactor. N-glycosylation is required for folding. In terms of processing, autophosphorylated. Post-translationally, propeptide cleavage by MBTPS1/S1P promotes FAM20C secretion and maximal kinase activity which is essential for efficient osteoblast differentiation and biomineralization. In the mammary gland, expressed at higher levels in lactating mice than in virgin mice (at protein level). Highly expressed in the tooth. No expression in the dental pulp. At the secretory stage of amelogenesis, it is detected in the matrix of the enamel, in the ameloblasts, and within the cells adjoining the stratum intermedium (a tissue layer analogous to the stellate reticulum seen in the developing molar). Strong expression is observed in maturation stage ameloblasts and throughout the non-cornified layers of the gingival epithelium. Expressed at moderate levels in bone and at low levels in kidney, liver, brain and lung. Very low expression, if any, in spleen and skeletal muscle.

It is found in the golgi apparatus membrane. Its subcellular location is the secreted. It localises to the endoplasmic reticulum. The enzyme catalyses L-seryl-[protein] + ATP = O-phospho-L-seryl-[protein] + ADP + H(+). The catalysed reaction is L-threonyl-[protein] + ATP = O-phospho-L-threonyl-[protein] + ADP + H(+). Its activity is regulated as follows. Serine/threonine protein kinase activity is increased upon interaction with FAM20A. Functionally, golgi serine/threonine protein kinase that phosphorylates secretory pathway proteins within Ser-x-Glu/pSer motifs and plays a key role in biomineralization of bones and teeth. Constitutes the main protein kinase for extracellular proteins, generating the majority of the extracellular phosphoproteome. Mainly phosphorylates proteins within the Ser-x-Glu/pSer motif, but also displays a broader substrate specificity. Phosphorylates ERO1A, enhancing its activity which is required to maintain endoplasmic reticulum redox homeostasis and for oxidative protein folding. During endoplasmic reticulum stress, phosphorylates P4HB/PDIA1 which induces a functional switch, causing P4HB to change from an oxidoreductase to a molecular chaperone. This is critical to maintain ER proteostasis and reduce cell death under ER stress. Phosphorylation of P4HB also promotes its interaction with ERN1, leading to reduced activity of ERN1, a key sensor for the endoplasmic reticulum unfolded protein response. Required for osteoblast differentiation and mineralization. Phosphorylates casein as well as a number of proteins involved in biomineralization such as AMELX, AMTN, ENAM and SPP1. In addition to its role in biomineralization, also plays a role in lipid homeostasis, wound healing and cell migration and adhesion. This chain is Extracellular serine/threonine protein kinase FAM20C, found in Mus musculus (Mouse).